Here is a 233-residue protein sequence, read N- to C-terminus: Orotidine 5'-phosphate decarboxylase (233 aa).

Substrate-binding positions include aspartate 11, lysine 34, 61–70, threonine 117, arginine 179, glutamine 188, glycine 208, and arginine 209; that span reads DLKLHDIPNT. Lysine 63 functions as the Proton donor in the catalytic mechanism.

Belongs to the OMP decarboxylase family. Type 1 subfamily. Homodimer.

The catalysed reaction is orotidine 5'-phosphate + H(+) = UMP + CO2. The protein operates within pyrimidine metabolism; UMP biosynthesis via de novo pathway; UMP from orotate: step 2/2. Catalyzes the decarboxylation of orotidine 5'-monophosphate (OMP) to uridine 5'-monophosphate (UMP). The sequence is that of Orotidine 5'-phosphate decarboxylase from Streptococcus pneumoniae (strain P1031).